The chain runs to 169 residues: Cytochrome c-type biogenesis protein CcmE (169 aa).

Topologically, residues 1–7 are cytoplasmic; that stretch reads MTRKSRR. Residues 8–28 form a helical; Signal-anchor for type II membrane protein membrane-spanning segment; that stretch reads LILIAACGAVLALALGLILSA. The Periplasmic segment spans residues 29–169; sequence MSGSIVFFRS…DATLGQRSER (141 aa). Heme is bound by residues His122 and Tyr126. Residues 135-169 are disordered; it reads LKAQGRWQEGGGKEAPKDAAKPASADATLGQRSER. Basic and acidic residues predominate over residues 145-154; that stretch reads GGKEAPKDAA.

This sequence belongs to the CcmE/CycJ family.

Its subcellular location is the cell inner membrane. Functionally, heme chaperone required for the biogenesis of c-type cytochromes. Transiently binds heme delivered by CcmC and transfers the heme to apo-cytochromes in a process facilitated by CcmF and CcmH. This is Cytochrome c-type biogenesis protein CcmE from Methylorubrum populi (strain ATCC BAA-705 / NCIMB 13946 / BJ001) (Methylobacterium populi).